The primary structure comprises 276 residues: Undecaprenyl-diphosphatase (276 aa).

A run of 7 helical transmembrane segments spans residues 48-68, 92-112, 119-139, 155-175, 196-216, 225-245, and 255-275; these read AANS…AIVF, LSIA…FLFE, LFSV…MLFA, ISYK…WPGF, ADFT…LSLV, DLMP…LFVV, and IKLV…LLIM.

This sequence belongs to the UppP family.

It is found in the cell membrane. The enzyme catalyses di-trans,octa-cis-undecaprenyl diphosphate + H2O = di-trans,octa-cis-undecaprenyl phosphate + phosphate + H(+). Its function is as follows. Catalyzes the dephosphorylation of undecaprenyl diphosphate (UPP). Confers resistance to bacitracin. In Bacillus subtilis (strain 168), this protein is Undecaprenyl-diphosphatase.